A 169-amino-acid polypeptide reads, in one-letter code: Ureidoglycolate lyase (169 aa).

The protein belongs to the ureidoglycolate lyase family. Homodimer. Ni(2+) is required as a cofactor.

It catalyses the reaction (S)-ureidoglycolate = urea + glyoxylate. It participates in nitrogen metabolism; (S)-allantoin degradation. Catalyzes the catabolism of the allantoin degradation intermediate (S)-ureidoglycolate, generating urea and glyoxylate. Involved in the utilization of allantoin as nitrogen source. The sequence is that of Ureidoglycolate lyase from Brucella anthropi (strain ATCC 49188 / DSM 6882 / CCUG 24695 / JCM 21032 / LMG 3331 / NBRC 15819 / NCTC 12168 / Alc 37) (Ochrobactrum anthropi).